The chain runs to 592 residues: uncharacterized protein (592 aa).

This is an uncharacterized protein from Acanthamoeba polyphaga mimivirus (APMV).